We begin with the raw amino-acid sequence, 366 residues long: Chorismate synthase (366 aa).

Residues Arg48 and Arg54 each coordinate NADP(+). Residues 125–127 (RSS), 238–239 (NA), Gly278, 293–297 (KPTSS), and Arg319 contribute to the FMN site.

It belongs to the chorismate synthase family. As to quaternary structure, homotetramer. The cofactor is FMNH2.

It catalyses the reaction 5-O-(1-carboxyvinyl)-3-phosphoshikimate = chorismate + phosphate. The protein operates within metabolic intermediate biosynthesis; chorismate biosynthesis; chorismate from D-erythrose 4-phosphate and phosphoenolpyruvate: step 7/7. Its function is as follows. Catalyzes the anti-1,4-elimination of the C-3 phosphate and the C-6 proR hydrogen from 5-enolpyruvylshikimate-3-phosphate (EPSP) to yield chorismate, which is the branch point compound that serves as the starting substrate for the three terminal pathways of aromatic amino acid biosynthesis. This reaction introduces a second double bond into the aromatic ring system. The sequence is that of Chorismate synthase from Ralstonia pickettii (strain 12J).